We begin with the raw amino-acid sequence, 168 residues long: Peptide deformylase 2 (168 aa).

Cys91 and His133 together coordinate Fe cation. The active site involves Glu134. His137 serves as a coordination point for Fe cation.

Belongs to the polypeptide deformylase family. The cofactor is Fe(2+).

The enzyme catalyses N-terminal N-formyl-L-methionyl-[peptide] + H2O = N-terminal L-methionyl-[peptide] + formate. Removes the formyl group from the N-terminal Met of newly synthesized proteins. Requires at least a dipeptide for an efficient rate of reaction. N-terminal L-methionine is a prerequisite for activity but the enzyme has broad specificity at other positions. This chain is Peptide deformylase 2, found in Vibrio vulnificus (strain CMCP6).